Consider the following 353-residue polypeptide: AA9 family lytic polysaccharide monooxygenase A (353 aa).

An N-terminal signal peptide occupies residues methionine 1 to alanine 19. Residues histidine 20 and histidine 102 each coordinate Cu(2+). A disulfide bond links cysteine 62 and cysteine 183. Histidine 169 contacts O2. Residue tyrosine 180 coordinates Cu(2+). The span at lysine 266–alanine 276 shows a compositional bias: low complexity. Residues lysine 266–serine 316 are disordered. Residues aspartate 279–threonine 290 are compositionally biased toward acidic residues. Over residues glutamate 291–alanine 304 the composition is skewed to low complexity. One can recognise a CBM1 domain in the interval glycine 315–isoleucine 351. An N-linked (GlcNAc...) asparagine glycan is attached at asparagine 327.

Belongs to the polysaccharide monooxygenase AA9 family. The cofactor is Cu(2+).

Its subcellular location is the secreted. The catalysed reaction is [(1-&gt;4)-beta-D-glucosyl]n+m + reduced acceptor + O2 = 4-dehydro-beta-D-glucosyl-[(1-&gt;4)-beta-D-glucosyl]n-1 + [(1-&gt;4)-beta-D-glucosyl]m + acceptor + H2O.. Functionally, lytic polysaccharide monooxygenase (LPMO) that depolymerizes crystalline and amorphous polysaccharides via the oxidation of scissile alpha- or beta-(1-4)-glycosidic bonds, yielding C4 oxidation products. Catalysis by LPMOs requires the reduction of the active-site copper from Cu(II) to Cu(I) by a reducing agent and H(2)O(2) or O(2) as a cosubstrate. This Aspergillus clavatus (strain ATCC 1007 / CBS 513.65 / DSM 816 / NCTC 3887 / NRRL 1 / QM 1276 / 107) protein is AA9 family lytic polysaccharide monooxygenase A (eglD).